Here is a 348-residue protein sequence, read N- to C-terminus: Phosphate acyltransferase (348 aa).

This sequence belongs to the PlsX family. As to quaternary structure, homodimer. Probably interacts with PlsY.

The protein localises to the cytoplasm. The enzyme catalyses a fatty acyl-[ACP] + phosphate = an acyl phosphate + holo-[ACP]. It participates in lipid metabolism; phospholipid metabolism. In terms of biological role, catalyzes the reversible formation of acyl-phosphate (acyl-PO(4)) from acyl-[acyl-carrier-protein] (acyl-ACP). This enzyme utilizes acyl-ACP as fatty acyl donor, but not acyl-CoA. The sequence is that of Phosphate acyltransferase from Rhizobium rhizogenes (strain K84 / ATCC BAA-868) (Agrobacterium radiobacter).